A 505-amino-acid polypeptide reads, in one-letter code: MKAAYTAYRCLTKDLEGCAMNPELTMESLGTLHGPVGGGSGGGGGGGGGGGGGGPGHEQELLASPSPHHAGRGAAGSLRGPPPPTAHQELGTAAAAAAAASRSAMVTSMASILDGSDYRPELSIPLHHAMSMSCDSSPPGMGMSNTYTTLTPLQPLPPISTVSDKFHHPHPHHHPHHHHHHHHHHQRLSGNVSGSFTLMRDERGLPSMNNLYSPYKEMPSMSQSLSPLAATPLGNGLGGLHNAQQSLPNYGPPGHDKMLSPNFDAHHTAMLTRGEQHLSRGLGTPPAAMMSHLNGLHHPGHTQSHGPVLAPSRERPPSSSSGSQVATSGQLEEINTKEVAQRITAELKRYSIPQAIFAQRVLCRSQGTLSDLLRNPKPWSKLKSGRETFRRMWKWLQEPEFQRMSALRLAACKRKEQEPNKDRNNSQKKSRLVFTDLQRRTLFAIFKENKRPSKEMQITISQQLGLELTTVSNFFMNARRRSLEKWQDDLGTGGSSSTSSTCTKA.

3 disordered regions span residues 29–94 (LGTL…GTAA), 165–190 (KFHH…RLSG), and 275–333 (EQHL…QLEE). Positions 35 to 56 (PVGGGSGGGGGGGGGGGGGGPG) are enriched in gly residues. Residues 167–187 (HHPHPHHHPHHHHHHHHHHQR) show a composition bias toward basic residues. The segment at residues 325–411 (VATSGQLEEI…QRMSALRLAA (87 aa)) is a DNA-binding region (CUT). The homeobox DNA-binding region spans 427-486 (QKKSRLVFTDLQRRTLFAIFKENKRPSKEMQITISQQLGLELTTVSNFFMNARRRSLEKW).

This sequence belongs to the CUT homeobox family.

Its subcellular location is the nucleus. Transcriptional activator. Activates the transcription of a number of liver genes such as HNF3B. The sequence is that of One cut domain family member 2 (Onecut2) from Mus musculus (Mouse).